A 449-amino-acid polypeptide reads, in one-letter code: Glucose-6-phosphate isomerase (449 aa).

Glu291 serves as the catalytic Proton donor. Active-site residues include His312 and Lys426.

The protein belongs to the GPI family.

Its subcellular location is the cytoplasm. The catalysed reaction is alpha-D-glucose 6-phosphate = beta-D-fructose 6-phosphate. It participates in carbohydrate biosynthesis; gluconeogenesis. It functions in the pathway carbohydrate degradation; glycolysis; D-glyceraldehyde 3-phosphate and glycerone phosphate from D-glucose: step 2/4. In terms of biological role, catalyzes the reversible isomerization of glucose-6-phosphate to fructose-6-phosphate. The polypeptide is Glucose-6-phosphate isomerase (Streptococcus agalactiae serotype Ia (strain ATCC 27591 / A909 / CDC SS700)).